Here is a 210-residue protein sequence, read N- to C-terminus: Small ribosomal subunit protein uS4 (210 aa).

In terms of domain architecture, S4 RNA-binding spans 99–161; sequence RRLDSVIYRM…SKNNATILSA (63 aa).

Belongs to the universal ribosomal protein uS4 family. Part of the 30S ribosomal subunit. Contacts protein S5. The interaction surface between S4 and S5 is involved in control of translational fidelity.

Its function is as follows. One of the primary rRNA binding proteins, it binds directly to 16S rRNA where it nucleates assembly of the body of the 30S subunit. With S5 and S12 plays an important role in translational accuracy. This chain is Small ribosomal subunit protein uS4, found in Solibacter usitatus (strain Ellin6076).